The sequence spans 333 residues: Gap junction alpha-4 protein (333 aa).

At 1 to 20 (MGDWGFLEKLLDQVQEHSTV) the chain is on the cytoplasmic side. Residues 21–40 (VGKIWLTVLFIFRILILGLA) form a helical membrane-spanning segment. Residues 41–76 (GESVWGDEQSDFECNTAQPGCTNVCYDQAFPISHIR) lie on the Extracellular side of the membrane. A helical transmembrane segment spans residues 77–99 (YWVLQFLFVSTPTLIYLGHVIYL). Residues 100–148 (SRREERLRQKEGELRALPSKDLHVERALAAIEHQMAKISVAEDGRLRIR) lie on the Cytoplasmic side of the membrane. A helical transmembrane segment spans residues 149–171 (GALMGTYVVSVLCKSVLEAGFLY). Residues 172–208 (GQWRLYGWTMEPVFVCQRAPCPHIVDCYVSRPTEKTI) lie on the Extracellular side of the membrane. Residues 209–231 (FIIFMLVVGVISLVLNLLELVHL) form a helical membrane-spanning segment. At 232–333 (LCRCVSREIK…NSSASKKQYV (102 aa)) the chain is on the cytoplasmic side. The disordered stretch occupies residues 292-333 (ANLTTEERLTSSRPPPFVNTAPQGGRKSPSRPNSSASKKQYV). The span at 321 to 333 (SRPNSSASKKQYV) shows a compositional bias: polar residues.

Belongs to the connexin family. Alpha-type (group II) subfamily. In terms of assembly, a connexon is composed of a hexamer of connexins. Highly expressed in lung.

The protein localises to the cell membrane. The protein resides in the cell junction. It is found in the gap junction. In terms of biological role, one gap junction consists of a cluster of closely packed pairs of transmembrane channels, the connexons, through which materials of low MW diffuse from one cell to a neighboring cell. The chain is Gap junction alpha-4 protein (Gja4) from Mus musculus (Mouse).